The sequence spans 362 residues: Histidinol-phosphate aminotransferase (362 aa).

Lys-210 is subject to N6-(pyridoxal phosphate)lysine.

Belongs to the class-II pyridoxal-phosphate-dependent aminotransferase family. Histidinol-phosphate aminotransferase subfamily. In terms of assembly, homodimer. Requires pyridoxal 5'-phosphate as cofactor.

The catalysed reaction is L-histidinol phosphate + 2-oxoglutarate = 3-(imidazol-4-yl)-2-oxopropyl phosphate + L-glutamate. It functions in the pathway amino-acid biosynthesis; L-histidine biosynthesis; L-histidine from 5-phospho-alpha-D-ribose 1-diphosphate: step 7/9. This is Histidinol-phosphate aminotransferase from Rhodopirellula baltica (strain DSM 10527 / NCIMB 13988 / SH1).